A 163-amino-acid polypeptide reads, in one-letter code: Cyclic pyranopterin monophosphate synthase (163 aa).

Residues 79–81 (LCH) and 118–119 (ME) each bind substrate. The active site involves Asp133.

Belongs to the MoaC family. As to quaternary structure, homohexamer; trimer of dimers.

It catalyses the reaction (8S)-3',8-cyclo-7,8-dihydroguanosine 5'-triphosphate = cyclic pyranopterin phosphate + diphosphate. Its pathway is cofactor biosynthesis; molybdopterin biosynthesis. In terms of biological role, catalyzes the conversion of (8S)-3',8-cyclo-7,8-dihydroguanosine 5'-triphosphate to cyclic pyranopterin monophosphate (cPMP). The polypeptide is Cyclic pyranopterin monophosphate synthase (Nocardioides sp. (strain ATCC BAA-499 / JS614)).